We begin with the raw amino-acid sequence, 67 residues long: Conotoxin LiC33 (67 aa).

Positions 1-22 (MRCVPVFIILLLLSPSAPSVDA) are cleaved as a signal peptide. Positions 23–48 (HPKTKDDVPLASFHDDAKRTLQRLWI) are excised as a propeptide. Phe-63 bears the Phenylalanine amide mark. Positions 65–67 (KGK) are excised as a propeptide.

This sequence belongs to the conotoxin T superfamily. Post-translationally, contains 2 disulfide bonds that can be either 'C1-C3, C2-C4' or 'C1-C4, C2-C3', since these disulfide connectivities have been observed for conotoxins with cysteine framework V (for examples, see AC P0DQQ7 and AC P81755). Expressed by the venom duct.

It is found in the secreted. The sequence is that of Conotoxin LiC33 from Conus lividus (Livid cone).